The chain runs to 95 residues: Small ribosomal subunit protein uS17 (95 aa).

It belongs to the universal ribosomal protein uS17 family. As to quaternary structure, part of the 30S ribosomal subunit.

Functionally, one of the primary rRNA binding proteins, it binds specifically to the 5'-end of 16S ribosomal RNA. In Mesomycoplasma hyopneumoniae (strain 7448) (Mycoplasma hyopneumoniae), this protein is Small ribosomal subunit protein uS17.